The primary structure comprises 2040 residues: Apolipoprotein(a) (2040 aa).

The first 19 residues, 1–19 (MEHKEVVLLLLLFLKSAAP), serve as a signal peptide directing secretion. 10 consecutive Kringle domains span residues 27-105 (DCYH…LTQC), 141-219 (ECYH…LTQC), 255-333 (ECYH…LTQC), 369-447 (ECYH…LTQC), 483-561 (ECYH…LTQC), 597-675 (ECYH…LTQC), 711-789 (ECYH…LTQC), 825-903 (ECYH…LTQC), 939-1017 (ECYH…LTRC), and 1053-1131 (DCYY…LTQC). Intrachain disulfides connect C28/C105, C49/C88, C77/C100, C142/C219, C163/C202, C191/C214, C256/C333, C277/C316, C305/C328, C370/C447, C391/C430, C419/C442, C484/C561, C505/C544, C533/C556, C598/C675, C619/C658, C647/C670, C712/C789, C733/C772, C761/C784, C826/C903, C847/C886, C875/C898, C940/C1017, C961/C1000, C989/C1012, C1054/C1131, C1075/C1114, and C1103/C1126. The N-linked (GlcNAc...) asparagine glycan is linked to N61. N101 carries an N-linked (GlcNAc...) asparagine glycan. The N-linked (GlcNAc...) asparagine glycan is linked to N215. N329 carries N-linked (GlcNAc...) asparagine glycosylation. Residue N443 is glycosylated (N-linked (GlcNAc...) asparagine). An N-linked (GlcNAc...) asparagine glycan is attached at N557. The N-linked (GlcNAc...) asparagine glycan is linked to N671. N-linked (GlcNAc...) asparagine glycosylation occurs at N785. N-linked (GlcNAc...) asparagine glycosylation occurs at N899. The N-linked (GlcNAc...) asparagine glycan is linked to N1013. N1127 carries N-linked (GlcNAc...) asparagine glycosylation. The disordered stretch occupies residues 1147 to 1166 (DPSTEASSEEAPTEQSPGVQ). 2 consecutive Kringle domains span residues 1167–1245 (DCYH…LTQC) and 1273–1351 (DCYH…LTQC). 6 disulfide bridges follow: C1168/C1245, C1189/C1228, C1217/C1240, C1274/C1351, C1295/C1334, and C1323/C1346. N-linked (GlcNAc...) asparagine glycosylation is present at N1241. N-linked (GlcNAc...) asparagine glycans are attached at residues N1347 and N1381. The tract at residues 1365-1388 (VPVPSTELPSEEAPTENSTGVQDC) is disordered. The region spanning 1387–1465 (DCYRGDGQSY…RWEYCNLTRC (79 aa)) is the Kringle 13 domain. 3 disulfide bridges follow: C1388–C1465, C1409–C1448, and C1437–C1460. Residue N1461 is glycosylated (N-linked (GlcNAc...) asparagine). The tract at residues 1476-1497 (PTVAPVPSTEAPSEQAPPEKSP) is disordered. Kringle domains follow at residues 1501-1579 (DCYH…LTQC), 1615-1693 (QCYH…LTRC), and 1719-1799 (DCMF…IPLC). 10 disulfides stabilise this stretch: C1502–C1579, C1523–C1562, C1551–C1574, C1616–C1693, C1637–C1676, C1665–C1688, C1720–C1799, C1741–C1782, C1770–C1794, and C1846–C1862. Residue N1575 is glycosylated (N-linked (GlcNAc...) asparagine). N1689 carries N-linked (GlcNAc...) asparagine glycosylation. Positions 1820–2038 (IVGGCVAHPH…FVTWIEGMMR (219 aa)) constitute a Peptidase S1 domain. Residues H1861 and D1904 each act as charge relay system in the active site. 3 disulfides stabilise this stretch: C1938–C1996, C1968–C1975, and C1986–C2014. S1990 functions as the Charge relay system in the catalytic mechanism.

Belongs to the peptidase S1 family. Plasminogen subfamily. As to quaternary structure, disulfide-linked to apo-B100. Binds to fibronectin and decorin. Post-translationally, N- and O-glycosylated. The N-glycans are complex biantennary structures present in either a mono- or disialylated state. The O-glycans are mostly (80%) represented by the monosialylated core type I structure, NeuNAcalpha2-3Galbeta1-3GalNAc, with smaller amounts of disialylated and non-sialylated O-glycans also detected.

Apo(a) is the main constituent of lipoprotein(a) (Lp(a)). It has serine proteinase activity and is able of autoproteolysis. Inhibits tissue-type plasminogen activator 1. Lp(a) may be a ligand for megalin/Gp 330. This chain is Apolipoprotein(a) (LPA), found in Homo sapiens (Human).